The chain runs to 95 residues: Small ribosomal subunit protein uS17 (95 aa).

The protein belongs to the universal ribosomal protein uS17 family. In terms of assembly, part of the 30S ribosomal subunit.

Its function is as follows. One of the primary rRNA binding proteins, it binds specifically to the 5'-end of 16S ribosomal RNA. This is Small ribosomal subunit protein uS17 from Psychrobacter sp. (strain PRwf-1).